A 560-amino-acid polypeptide reads, in one-letter code: Glutamate--tRNA ligase, chloroplastic/mitochondrial (560 aa).

L-glutamate is bound at residue 47–49 (RFA). The 'HIGH' region motif lies at 50-60 (PSPTGNLHVGG). His-57 provides a ligand contact to ATP. L-glutamate is bound by residues Glu-83, 235-239 (YNFCV), and Arg-253. Residues Glu-256 and 291 to 295 (KLSKR) contribute to the ATP site. The 'KMSKS' region signature appears at 291–295 (KLSKR).

Belongs to the class-I aminoacyl-tRNA synthetase family. Glutamate--tRNA ligase type 1 subfamily.

The protein resides in the plastid. It is found in the chloroplast. It localises to the mitochondrion. It carries out the reaction tRNA(Glu) + L-glutamate + ATP = L-glutamyl-tRNA(Glu) + AMP + diphosphate. Functionally, catalyzes the attachment of glutamate to tRNA(Glu) in a two-step reaction: glutamate is first activated by ATP to form Glu-AMP and then transferred to the acceptor end of tRNA(Glu). The sequence is that of Glutamate--tRNA ligase, chloroplastic/mitochondrial from Hordeum vulgare (Barley).